The following is a 132-amino-acid chain: UPF0251 protein PTH_0588 (132 aa).

The protein belongs to the UPF0251 family.

This Pelotomaculum thermopropionicum (strain DSM 13744 / JCM 10971 / SI) protein is UPF0251 protein PTH_0588.